The primary structure comprises 363 residues: Chorismate synthase (363 aa).

2 residues coordinate NADP(+): Arg48 and Arg54. Residues 125 to 127 (RSS), 237 to 238 (NA), Gly277, 292 to 296 (KPTSS), and Arg318 each bind FMN.

The protein belongs to the chorismate synthase family. As to quaternary structure, homotetramer. FMNH2 serves as cofactor.

The enzyme catalyses 5-O-(1-carboxyvinyl)-3-phosphoshikimate = chorismate + phosphate. Its pathway is metabolic intermediate biosynthesis; chorismate biosynthesis; chorismate from D-erythrose 4-phosphate and phosphoenolpyruvate: step 7/7. Its function is as follows. Catalyzes the anti-1,4-elimination of the C-3 phosphate and the C-6 proR hydrogen from 5-enolpyruvylshikimate-3-phosphate (EPSP) to yield chorismate, which is the branch point compound that serves as the starting substrate for the three terminal pathways of aromatic amino acid biosynthesis. This reaction introduces a second double bond into the aromatic ring system. The chain is Chorismate synthase from Pseudomonas savastanoi pv. phaseolicola (strain 1448A / Race 6) (Pseudomonas syringae pv. phaseolicola (strain 1448A / Race 6)).